Here is a 438-residue protein sequence, read N- to C-terminus: tRNA modification GTPase MnmE (438 aa).

(6S)-5-formyl-5,6,7,8-tetrahydrofolate-binding residues include Arg-21, Glu-79, and Lys-118. Positions 215-362 (GFSIVLIGAP…LEARIEQIVR (148 aa)) constitute a TrmE-type G domain. K(+) is bound at residue Asn-225. GTP-binding positions include 225 to 230 (NAGKSS), 244 to 250 (TDIPGTT), and 269 to 272 (DTAG). Ser-229 lines the Mg(2+) pocket. Thr-244, Ile-246, and Thr-249 together coordinate K(+). Thr-250 contributes to the Mg(2+) binding site. Lys-438 provides a ligand contact to (6S)-5-formyl-5,6,7,8-tetrahydrofolate.

Belongs to the TRAFAC class TrmE-Era-EngA-EngB-Septin-like GTPase superfamily. TrmE GTPase family. As to quaternary structure, homodimer. Heterotetramer of two MnmE and two MnmG subunits. Requires K(+) as cofactor.

Its subcellular location is the cytoplasm. In terms of biological role, exhibits a very high intrinsic GTPase hydrolysis rate. Involved in the addition of a carboxymethylaminomethyl (cmnm) group at the wobble position (U34) of certain tRNAs, forming tRNA-cmnm(5)s(2)U34. The chain is tRNA modification GTPase MnmE from Maricaulis maris (strain MCS10) (Caulobacter maris).